The sequence spans 159 residues: Phosphodiesterase delta-like protein (159 aa).

The protein belongs to the PDE6D/unc-119 family.

This chain is Phosphodiesterase delta-like protein (pdl-1), found in Caenorhabditis elegans.